Consider the following 163-residue polypeptide: Succinate dehydrogenase assembly factor 2, mitochondrial (163 aa).

This sequence belongs to the SDHAF2 family. Interacts with the flavoprotein subunit within the SDH catalytic dimer.

Its subcellular location is the mitochondrion matrix. Its function is as follows. Plays an essential role in the assembly of succinate dehydrogenase (SDH), an enzyme complex (also referred to as respiratory complex II) that is a component of both the tricarboxylic acid (TCA) cycle and the mitochondrial electron transport chain, and which couples the oxidation of succinate to fumarate with the reduction of ubiquinone (coenzyme Q) to ubiquinol. Required for flavinylation (covalent attachment of FAD) of the flavoprotein subunit of the SDH catalytic dimer. This Kluyveromyces lactis (strain ATCC 8585 / CBS 2359 / DSM 70799 / NBRC 1267 / NRRL Y-1140 / WM37) (Yeast) protein is Succinate dehydrogenase assembly factor 2, mitochondrial.